The following is a 95-amino-acid chain: Protein TusB (95 aa).

Belongs to the DsrH/TusB family. Heterohexamer, formed by a dimer of trimers. The hexameric TusBCD complex contains 2 copies each of TusB, TusC and TusD. The TusBCD complex interacts with TusE.

The protein localises to the cytoplasm. In terms of biological role, part of a sulfur-relay system required for 2-thiolation of 5-methylaminomethyl-2-thiouridine (mnm(5)s(2)U) at tRNA wobble positions. The polypeptide is Protein TusB (Shigella flexneri).